Reading from the N-terminus, the 207-residue chain is 2,3-bisphosphoglycerate-dependent phosphoglycerate mutase (207 aa).

Substrate is bound by residues 10–17 (RHGQSEWN), 23–24 (TG), Arg62, 89–92 (ERDY), Lys100, 116–117 (RR), and 160–161 (GN). His11 serves as the catalytic Tele-phosphohistidine intermediate. Catalysis depends on Glu89, which acts as the Proton donor/acceptor.

This sequence belongs to the phosphoglycerate mutase family. BPG-dependent PGAM subfamily. In terms of assembly, homodimer.

It carries out the reaction (2R)-2-phosphoglycerate = (2R)-3-phosphoglycerate. It participates in carbohydrate degradation; glycolysis; pyruvate from D-glyceraldehyde 3-phosphate: step 3/5. Functionally, catalyzes the interconversion of 2-phosphoglycerate and 3-phosphoglycerate. The sequence is that of 2,3-bisphosphoglycerate-dependent phosphoglycerate mutase from Bradyrhizobium diazoefficiens (strain JCM 10833 / BCRC 13528 / IAM 13628 / NBRC 14792 / USDA 110).